Consider the following 435-residue polypeptide: NADH-quinone oxidoreductase subunit D (435 aa).

This sequence belongs to the complex I 49 kDa subunit family. NDH-1 is composed of 14 different subunits. Subunits NuoB, C, D, E, F, and G constitute the peripheral sector of the complex.

Its subcellular location is the cell inner membrane. It carries out the reaction a quinone + NADH + 5 H(+)(in) = a quinol + NAD(+) + 4 H(+)(out). In terms of biological role, NDH-1 shuttles electrons from NADH, via FMN and iron-sulfur (Fe-S) centers, to quinones in the respiratory chain. The immediate electron acceptor for the enzyme in this species is believed to be ubiquinone. Couples the redox reaction to proton translocation (for every two electrons transferred, four hydrogen ions are translocated across the cytoplasmic membrane), and thus conserves the redox energy in a proton gradient. The sequence is that of NADH-quinone oxidoreductase subunit D from Xanthomonas axonopodis pv. citri (strain 306).